Consider the following 98-residue polypeptide: UPF0473 protein LAR_0522 (98 aa).

Belongs to the UPF0473 family.

The protein is UPF0473 protein LAR_0522 of Limosilactobacillus reuteri subsp. reuteri (strain JCM 1112) (Lactobacillus reuteri).